Consider the following 355-residue polypeptide: Protein RecA (355 aa).

66 to 73 is an ATP binding site; that stretch reads GPESSGKT. Positions 331–355 are disordered; it reads DVPEEDLPTTEDEQINILPDDSTEE. Residues 332-344 show a composition bias toward acidic residues; the sequence is VPEEDLPTTEDEQ.

This sequence belongs to the RecA family.

It is found in the cytoplasm. Can catalyze the hydrolysis of ATP in the presence of single-stranded DNA, the ATP-dependent uptake of single-stranded DNA by duplex DNA, and the ATP-dependent hybridization of homologous single-stranded DNAs. It interacts with LexA causing its activation and leading to its autocatalytic cleavage. In Latilactobacillus sakei subsp. sakei (strain 23K) (Lactobacillus sakei subsp. sakei), this protein is Protein RecA.